A 570-amino-acid polypeptide reads, in one-letter code: Sulfite reductase [NADPH] hemoprotein beta-component (570 aa).

Residues Cys434, Cys440, Cys479, and Cys483 each contribute to the [4Fe-4S] cluster site. Siroheme is bound at residue Cys483.

The protein belongs to the nitrite and sulfite reductase 4Fe-4S domain family. In terms of assembly, alpha(8)-beta(8). The alpha component is a flavoprotein, the beta component is a hemoprotein. It depends on siroheme as a cofactor. Requires [4Fe-4S] cluster as cofactor.

The enzyme catalyses hydrogen sulfide + 3 NADP(+) + 3 H2O = sulfite + 3 NADPH + 4 H(+). Its pathway is sulfur metabolism; hydrogen sulfide biosynthesis; hydrogen sulfide from sulfite (NADPH route): step 1/1. Its function is as follows. Component of the sulfite reductase complex that catalyzes the 6-electron reduction of sulfite to sulfide. This is one of several activities required for the biosynthesis of L-cysteine from sulfate. The chain is Sulfite reductase [NADPH] hemoprotein beta-component from Shigella flexneri.